The sequence spans 469 residues: UDP-N-acetylmuramate--L-alanine ligase (469 aa).

Gly114–Thr120 contacts ATP.

It belongs to the MurCDEF family.

It is found in the cytoplasm. It catalyses the reaction UDP-N-acetyl-alpha-D-muramate + L-alanine + ATP = UDP-N-acetyl-alpha-D-muramoyl-L-alanine + ADP + phosphate + H(+). It functions in the pathway cell wall biogenesis; peptidoglycan biosynthesis. Cell wall formation. The chain is UDP-N-acetylmuramate--L-alanine ligase from Sinorhizobium fredii (strain NBRC 101917 / NGR234).